Here is a 103-residue protein sequence, read N- to C-terminus: Histone H4.1 (103 aa).

The span at 1-14 (MSGRGKGGKGLGKG) shows a compositional bias: gly residues. Residues 1–20 (MSGRGKGGKGLGKGGAKRHR) form a disordered region. Position 6 is an N6-acetyl-N6-methyllysine; alternate (Lys6). Lys6, Lys9, and Lys13 each carry N6-methyllysine; alternate. The residue at position 13 (Lys13) is an N6-acetyl-N6-methyllysine; alternate. Residues 17 to 21 (KRHRK) mediate DNA binding. The residue at position 92 (Lys92) is an N6-glutaryllysine.

The protein belongs to the histone H4 family. As to quaternary structure, the nucleosome is a histone octamer containing two molecules each of H2A, H2B, H3 and H4 assembled in one H3-H4 heterotetramer and two H2A-H2B heterodimers. The octamer wraps approximately 147 bp of DNA. Post-translationally, glutarylation at Lys-92 (H4K91glu) destabilizes nucleosomes by promoting dissociation of the H2A-H2B dimers from nucleosomes.

The protein localises to the nucleus. It is found in the chromosome. In terms of biological role, core component of nucleosome. Nucleosomes wrap and compact DNA into chromatin, limiting DNA accessibility to the cellular machineries which require DNA as a template. Histones thereby play a central role in transcription regulation, DNA repair, DNA replication and chromosomal stability. DNA accessibility is regulated via a complex set of post-translational modifications of histones, also called histone code, and nucleosome remodeling. This is Histone H4.1 (hhfA) from Emericella nidulans (strain FGSC A4 / ATCC 38163 / CBS 112.46 / NRRL 194 / M139) (Aspergillus nidulans).